Reading from the N-terminus, the 1213-residue chain is MVDVNRFKSMQITLASPSKVRSWSYGEVKKPETINYRTLKPEREGLFDEVIFGPTKDWECACGKYKRIRYKGIVCDRCGVEVTRAKVRRERMGHIELKAPVSHIWYFKGIPSRMGLTLDMSPRALEEVIYFAAYVVIDPKDTPLEPKSLLTEREYREKLQEYGHGSFVAKMGAEAIQDLLKRVDLAAEIAELKEELKSASGQKRIKAVRRLDVLDAFNKSGNKPEWMVLNILPVIPPDLRPMVQLDGGRFAASDLNDLYRRVINRNNRLARLLELNAPGIIVQNEKRMLQEAVDALIDNGRRGRPITGPGSRPLKSLSHMLKGKQGRFRQNLLGKRVDFSGRSVIAVGPTLKMYQCGVPREMAIELFKPFVMREIVAKEYAGNVKAAKRMVERGDERIWDILEEVIKEHPVLLNRAPTLHRLGIQAFEPVLIDGKALRLHPLVCEAYNADFDGDQMAIHVPLSEEAQAEARLLMLAAEHILNPKDGKPVVTPSQDMVLGNYYLTMEDAGREGEGMIFKDKDEAVMAYRNGYAHLHSRVGIAVDSMPNKPWKDSQRHKIMVTTVGKILFNDIMPEDLPYLQEPNNANLTEGTPDKYFLEPGQDIQEVIDGLEINVPFKKKNLGNIIAETFKRFRTTETSAFLDRLKDLGYYHSTLAGLTVGIADIPVIDNKAEIIDAAHHRVEEINKAFRRGLMTDDDRYVAVTTTWREAKEALEKRLIETQDPKNPIVMMMDSGARGNISNFSQLAGMRGLMAAPNGRIMELPILSNFREGLSVLEMFFSTHGARKGMTDTALKTADSGYLTRRLVDVAQDVIIREDDCGTDRGLLIRAITDGKEVTETLEERLQGRYTRKSVKHPETGEVLIGADQLITEDMARKIVDAGVEEVTIRSVFTCATRHGVCRHCYGINLATGDAVEVGEAVGTIAAQSIGEPGTQLTMRTFHTGGVASNTDITQGLPRIQEIFEARNPKGEAVITEVKGNVVEIEEDASTRTKKVYVQGKTGMGEYVVPFTARMKVEVGDEVNRGAALTEGSIQPKRLLEVRDTLSVETYLLAEVQKVYRSQGVEIGDKHVEVMVRQMLRKVRVMDPGDTDLLPGTLMDISDFTDANKDIVISGGIPATSRPVLMGITKASLETNSFLSAASFQETTRVLTDAAIRGKKDHLLGLKENVIIGKIIPAGTGMARYRNIEPQAMNEIEVIDHTEVSAEAVFTAEAE.

The Zn(2+) site is built by Cys-60, Cys-62, Cys-75, and Cys-78. Asp-450, Asp-452, and Asp-454 together coordinate Mg(2+). The Zn(2+) site is built by Cys-819, Cys-893, Cys-900, and Cys-903.

Belongs to the RNA polymerase beta' chain family. The RNAP catalytic core consists of 2 alpha, 1 beta, 1 beta' and 1 omega subunit. When a sigma factor is associated with the core the holoenzyme is formed, which can initiate transcription. The cofactor is Mg(2+). Zn(2+) serves as cofactor.

The catalysed reaction is RNA(n) + a ribonucleoside 5'-triphosphate = RNA(n+1) + diphosphate. Functionally, DNA-dependent RNA polymerase catalyzes the transcription of DNA into RNA using the four ribonucleoside triphosphates as substrates. The chain is DNA-directed RNA polymerase subunit beta' from Streptococcus pyogenes serotype M4 (strain MGAS10750).